Reading from the N-terminus, the 307-residue chain is Oxygen-dependent coproporphyrinogen-III oxidase (307 aa).

Residue serine 99 participates in substrate binding. A divalent metal cation contacts are provided by histidine 103 and histidine 113. Histidine 113 functions as the Proton donor in the catalytic mechanism. Residue 115-117 coordinates substrate; the sequence is NVR. A divalent metal cation contacts are provided by histidine 152 and histidine 182. The tract at residues 247-282 is important for dimerization; it reads YVEFNLVFDRGTLFGLQSGGRTESILMSMPPVANWR. 265–267 lines the substrate pocket; the sequence is GGR.

It belongs to the aerobic coproporphyrinogen-III oxidase family. As to quaternary structure, homodimer. Requires a divalent metal cation as cofactor.

The protein resides in the cytoplasm. The enzyme catalyses coproporphyrinogen III + O2 + 2 H(+) = protoporphyrinogen IX + 2 CO2 + 2 H2O. The protein operates within porphyrin-containing compound metabolism; protoporphyrin-IX biosynthesis; protoporphyrinogen-IX from coproporphyrinogen-III (O2 route): step 1/1. In terms of biological role, involved in the heme biosynthesis. Catalyzes the aerobic oxidative decarboxylation of propionate groups of rings A and B of coproporphyrinogen-III to yield the vinyl groups in protoporphyrinogen-IX. The sequence is that of Oxygen-dependent coproporphyrinogen-III oxidase from Burkholderia cenocepacia (strain ATCC BAA-245 / DSM 16553 / LMG 16656 / NCTC 13227 / J2315 / CF5610) (Burkholderia cepacia (strain J2315)).